Here is a 313-residue protein sequence, read N- to C-terminus: Protein sprouty homolog 1 (313 aa).

An N-acetylmethionine modification is found at methionine 1. Residues 43–152 (QIKAIRGSNE…RSDRVIRTQP (110 aa)) are disordered. Residues 69 to 79 (PRPEKQERTHE) show a composition bias toward basic and acidic residues. Residues 106–125 (SRSTSTGSAASSGSSSSVSS) show a composition bias toward low complexity. An SPR domain is found at 177-289 (QCGKCKCGEC…CYDWTHRPGC (113 aa)).

The protein belongs to the sprouty family. In terms of assembly, forms heterodimers with SPRY2. Interacts with TESK1. Interacts with CAV1 (via C-terminus).

Its subcellular location is the cytoplasm. It localises to the membrane. In terms of biological role, inhibits fibroblast growth factor (FGF)-induced retinal lens fiber differentiation, probably by inhibiting FGF-mediated phosphorylation of ERK1/2. Inhibits TGFB-induced epithelial-to-mesenchymal transition in lens epithelial cells. The polypeptide is Protein sprouty homolog 1 (Spry1) (Mus musculus (Mouse)).